Reading from the N-terminus, the 361-residue chain is Cysteine-rich with EGF-like domain protein 2-B (361 aa).

An N-terminal signal peptide occupies residues 1–24 (MNGSRAWRLAAWLLLCLSCSAAVA). The EGF-like 1 domain occupies 134-176 (DCLACLGGSERPCHGNGFCSGDGTRSGDGSCRCKAEYTGSFCL). 3 disulfides stabilise this stretch: cysteine 138-cysteine 152, cysteine 146-cysteine 164, and cysteine 166-cysteine 175. An N-linked (GlcNAc...) asparagine glycan is attached at asparagine 188. FU repeat units follow at residues 191–238 (HAVC…EESP) and 251–298 (SFLC…SEKL). In terms of domain architecture, EGF-like 2; calcium-binding spans 288–329 (DVDECDASEKLCLRENEVCLNTAGSYKCTCSEGFEDKEGNCV). Cystine bridges form between cysteine 292–cysteine 306, cysteine 299–cysteine 315, and cysteine 317–cysteine 328. The tract at residues 339–361 (ITEGETGTPASDTNILNTAHEDL) is disordered. Positions 346–355 (TPASDTNILN) are enriched in polar residues.

Belongs to the CRELD family.

It localises to the secreted. Its subcellular location is the endoplasmic reticulum. Its function is as follows. Possible role in neuronal acetylcholine receptor transport. This Xenopus laevis (African clawed frog) protein is Cysteine-rich with EGF-like domain protein 2-B (creld2-b).